Here is a 158-residue protein sequence, read N- to C-terminus: NAD(P)H-quinone oxidoreductase subunit J, chloroplastic (158 aa).

Belongs to the complex I 30 kDa subunit family. As to quaternary structure, NDH is composed of at least 16 different subunits, 5 of which are encoded in the nucleus.

The protein resides in the plastid. Its subcellular location is the chloroplast thylakoid membrane. The catalysed reaction is a plastoquinone + NADH + (n+1) H(+)(in) = a plastoquinol + NAD(+) + n H(+)(out). The enzyme catalyses a plastoquinone + NADPH + (n+1) H(+)(in) = a plastoquinol + NADP(+) + n H(+)(out). In terms of biological role, NDH shuttles electrons from NAD(P)H:plastoquinone, via FMN and iron-sulfur (Fe-S) centers, to quinones in the photosynthetic chain and possibly in a chloroplast respiratory chain. The immediate electron acceptor for the enzyme in this species is believed to be plastoquinone. Couples the redox reaction to proton translocation, and thus conserves the redox energy in a proton gradient. In Buxus microphylla (Littleleaf boxwood), this protein is NAD(P)H-quinone oxidoreductase subunit J, chloroplastic.